The primary structure comprises 104 residues: Large ribosomal subunit protein uL24 (104 aa).

The protein belongs to the universal ribosomal protein uL24 family. In terms of assembly, part of the 50S ribosomal subunit.

In terms of biological role, one of two assembly initiator proteins, it binds directly to the 5'-end of the 23S rRNA, where it nucleates assembly of the 50S subunit. One of the proteins that surrounds the polypeptide exit tunnel on the outside of the subunit. The chain is Large ribosomal subunit protein uL24 from Shewanella sp. (strain W3-18-1).